A 154-amino-acid polypeptide reads, in one-letter code: Protein-export protein SecB (154 aa).

Belongs to the SecB family. As to quaternary structure, homotetramer, a dimer of dimers. One homotetramer interacts with 1 SecA dimer.

The protein resides in the cytoplasm. In terms of biological role, one of the proteins required for the normal export of preproteins out of the cell cytoplasm. It is a molecular chaperone that binds to a subset of precursor proteins, maintaining them in a translocation-competent state. It also specifically binds to its receptor SecA. In Vibrio cholerae serotype O1 (strain ATCC 39541 / Classical Ogawa 395 / O395), this protein is Protein-export protein SecB.